The primary structure comprises 300 residues: MPRSHDPSRVELLRQEGSTMNEKRVSISVEDIRGAVATWKTTSGAPITPYPLPQFFLQPPSSGGGSRNVGGGDGAAGNSKNGSMNSLRMQAYAKKTDDDVDLGHRGELDLSEKYNYDLSKAQLKASSRTSALLAGFAMVCLVELQYDDSTSKPLLIVLGVVTSLLVSVHLLALMMSTCILPYMEATGCTQDSPHLKLKFYIDLSWLFSTCIGLLLFLVEIGVIFYVKFTAVGYPTAGYITTAMLIPVGIVFVLFSYLIHKNRVSHSLGRFKDKVDTMKQFLDVEANLQKSTIAPSTIRDI.

Residues 1–128 (MPRSHDPSRV…SKAQLKASSR (128 aa)) lie on the Cytoplasmic side of the membrane. Residues 58 to 82 (QPPSSGGGSRNVGGGDGAAGNSKNG) are disordered. Residues 62-75 (SGGGSRNVGGGDGA) are compositionally biased toward gly residues. The chain crosses the membrane as a helical span at residues 129 to 146 (TSALLAGFAMVCLVELQY). Topologically, residues 147 to 153 (DDSTSKP) are extracellular. Residues 154–174 (LLIVLGVVTSLLVSVHLLALM) traverse the membrane as a helical segment. The Cytoplasmic segment spans residues 175 to 205 (MSTCILPYMEATGCTQDSPHLKLKFYIDLSW). Residues 206–226 (LFSTCIGLLLFLVEIGVIFYV) form a helical membrane-spanning segment. Over 227–237 (KFTAVGYPTAG) the chain is Extracellular. The helical transmembrane segment at 238–258 (YITTAMLIPVGIVFVLFSYLI) threads the bilayer. Residues 259-300 (HKNRVSHSLGRFKDKVDTMKQFLDVEANLQKSTIAPSTIRDI) lie on the Cytoplasmic side of the membrane.

Belongs to the Orai family.

It is found in the membrane. In terms of biological role, ca(2+) release-activated Ca(2+)-like (CRAC-like) channel subunit which mediates Ca(2+) influx and increase in Ca(2+)-selective current by synergy with the Ca(2+) sensor, stim-1. Required for Ca(2+) and IP3-dependent contractile activity of sheath cells and the spermatheca. Affects brood size and somatic cell function. The sequence is that of Protein orai (orai-1) from Caenorhabditis briggsae.